The sequence spans 513 residues: ATP synthase subunit alpha (513 aa).

ATP is bound at residue Gly169–Thr176.

The protein belongs to the ATPase alpha/beta chains family. As to quaternary structure, F-type ATPases have 2 components, CF(1) - the catalytic core - and CF(0) - the membrane proton channel. CF(1) has five subunits: alpha(3), beta(3), gamma(1), delta(1), epsilon(1). CF(0) has three main subunits: a(1), b(2) and c(9-12). The alpha and beta chains form an alternating ring which encloses part of the gamma chain. CF(1) is attached to CF(0) by a central stalk formed by the gamma and epsilon chains, while a peripheral stalk is formed by the delta and b chains.

The protein resides in the cell inner membrane. The enzyme catalyses ATP + H2O + 4 H(+)(in) = ADP + phosphate + 5 H(+)(out). Produces ATP from ADP in the presence of a proton gradient across the membrane. The alpha chain is a regulatory subunit. This Shewanella putrefaciens (strain CN-32 / ATCC BAA-453) protein is ATP synthase subunit alpha.